We begin with the raw amino-acid sequence, 105 residues long: UPF0251 protein AF_0666 (105 aa).

Belongs to the UPF0251 family.

This is UPF0251 protein AF_0666 from Archaeoglobus fulgidus (strain ATCC 49558 / DSM 4304 / JCM 9628 / NBRC 100126 / VC-16).